The following is a 414-amino-acid chain: Serine/arginine (SR)-type shuttling mRNA binding protein NPL3 (414 aa).

A compositionally biased stretch (basic and acidic residues) spans 1–11 (MSEAQETHVEQ). The segment at 1-119 (MSEAQETHVE…GRPPMHHRQE (119 aa)) is disordered. Residue serine 15 is modified to Phosphoserine. Over residues 33 to 51 (DAPQEPQVPQESAPQESAP) the composition is skewed to low complexity. Pro residues predominate over residues 52–68 (QEPPAPQEQNDVPPPSN). Residues 75–92 (EESHSVQDYQEAHQHHQP) are compositionally biased toward basic and acidic residues. A Phosphoserine modification is found at serine 79. Positions 93–105 (PEPQPYYPPPPPG) are enriched in pro residues. 2 consecutive RRM domains span residues 125–195 (TRLF…YSKL) and 200–275 (YRIT…RDDN). Serine 182, serine 212, and serine 224 each carry phosphoserine. Residues 269–299 (TVERDDNPPPIRRSNRGGFRGRGGFRGGFRG) form a disordered region. Positions 286–299 (GFRGRGGFRGGFRG) are enriched in gly residues. A dimethylated arginine mark is found at arginine 288, arginine 290, arginine 294, and arginine 298. Arginine 302 carries the omega-N-methylarginine modification. Residues arginine 307 and arginine 314 each carry the dimethylated arginine; alternate modification. 2 positions are modified to omega-N-methylarginine; alternate: arginine 307 and arginine 314. Omega-N-methylarginine is present on residues arginine 321, arginine 329, arginine 337, and arginine 344. The disordered stretch occupies residues 343–414 (SRGGYDSPRG…DAPRERSPTR (72 aa)). The span at 346–360 (GYDSPRGGYDSPRGG) shows a compositional bias: low complexity. Dimethylated arginine; alternate is present on arginine 351. Omega-N-methylarginine; alternate is present on arginine 351. Serine 356 carries the phosphoserine modification. Arginine 358, arginine 363, arginine 377, and arginine 384 each carry dimethylated arginine; alternate. An omega-N-methylarginine; alternate mark is found at arginine 358, arginine 363, arginine 377, and arginine 384. The span at 379 to 389 (SYGGSRGGYDG) shows a compositional bias: gly residues. The residue at position 391 (arginine 391) is an Omega-N-methylarginine. Residues 399–414 (DAYRTRDAPRERSPTR) show a composition bias toward basic and acidic residues.

It belongs to the RRM GAR family. As to quaternary structure, interacts with RRP6. Methylated by HMT1. The methylation is required for nuclear export.

The protein localises to the cytoplasm. It is found in the nucleus. Its subcellular location is the stress granule. Functionally, involved in mRNA processing and export. Required for efficient splicing of a large set of pre-mRNAs by efficient co-transcriptional recruitment of the splicing machinery. Remains associated with the mRNP during early steps of translation elongation. This Saccharomyces cerevisiae (strain ATCC 204508 / S288c) (Baker's yeast) protein is Serine/arginine (SR)-type shuttling mRNA binding protein NPL3.